A 713-amino-acid chain; its full sequence is Phosphoribosylformylglycinamidine synthase subunit PurL (713 aa).

The span at 1-17 shows a compositional bias: basic and acidic residues; sequence MSLSPSDRELVTEELGR. The segment at 1–20 is disordered; that stretch reads MSLSPSDRELVTEELGREPT. Residue H34 is part of the active site. Y37 serves as a coordination point for ATP. E85 is a binding site for Mg(2+). Residues 86–89 and R108 contribute to the substrate site; that span reads SHNH. The active-site Proton acceptor is H87. D109 is a Mg(2+) binding site. Q233 lines the substrate pocket. D261 contacts Mg(2+). Residue 305-307 coordinates substrate; it reads ESQ. 2 residues coordinate ATP: D480 and G517. Residue N518 participates in Mg(2+) binding. S520 is a substrate binding site.

Belongs to the FGAMS family. Monomer. Part of the FGAM synthase complex composed of 1 PurL, 1 PurQ and 2 PurS subunits.

It localises to the cytoplasm. It carries out the reaction N(2)-formyl-N(1)-(5-phospho-beta-D-ribosyl)glycinamide + L-glutamine + ATP + H2O = 2-formamido-N(1)-(5-O-phospho-beta-D-ribosyl)acetamidine + L-glutamate + ADP + phosphate + H(+). The protein operates within purine metabolism; IMP biosynthesis via de novo pathway; 5-amino-1-(5-phospho-D-ribosyl)imidazole from N(2)-formyl-N(1)-(5-phospho-D-ribosyl)glycinamide: step 1/2. In terms of biological role, part of the phosphoribosylformylglycinamidine synthase complex involved in the purines biosynthetic pathway. Catalyzes the ATP-dependent conversion of formylglycinamide ribonucleotide (FGAR) and glutamine to yield formylglycinamidine ribonucleotide (FGAM) and glutamate. The FGAM synthase complex is composed of three subunits. PurQ produces an ammonia molecule by converting glutamine to glutamate. PurL transfers the ammonia molecule to FGAR to form FGAM in an ATP-dependent manner. PurS interacts with PurQ and PurL and is thought to assist in the transfer of the ammonia molecule from PurQ to PurL. This is Phosphoribosylformylglycinamidine synthase subunit PurL from Natronomonas pharaonis (strain ATCC 35678 / DSM 2160 / CIP 103997 / JCM 8858 / NBRC 14720 / NCIMB 2260 / Gabara) (Halobacterium pharaonis).